The following is a 453-amino-acid chain: Serine--tRNA ligase (453 aa).

249–251 (TSE) is a binding site for L-serine. ATP-binding positions include 280–282 (RKE) and Val296. Glu303 contributes to the L-serine binding site. 367–370 (EMVS) contributes to the ATP binding site. L-serine is bound at residue Thr404.

This sequence belongs to the class-II aminoacyl-tRNA synthetase family. Type-1 seryl-tRNA synthetase subfamily. As to quaternary structure, homodimer. The tRNA molecule binds across the dimer.

The protein resides in the cytoplasm. The enzyme catalyses tRNA(Ser) + L-serine + ATP = L-seryl-tRNA(Ser) + AMP + diphosphate + H(+). It carries out the reaction tRNA(Sec) + L-serine + ATP = L-seryl-tRNA(Sec) + AMP + diphosphate + H(+). It functions in the pathway aminoacyl-tRNA biosynthesis; selenocysteinyl-tRNA(Sec) biosynthesis; L-seryl-tRNA(Sec) from L-serine and tRNA(Sec): step 1/1. In terms of biological role, catalyzes the attachment of serine to tRNA(Ser). Is also able to aminoacylate tRNA(Sec) with serine, to form the misacylated tRNA L-seryl-tRNA(Sec), which will be further converted into selenocysteinyl-tRNA(Sec). The sequence is that of Serine--tRNA ligase from Archaeoglobus fulgidus (strain ATCC 49558 / DSM 4304 / JCM 9628 / NBRC 100126 / VC-16).